Consider the following 430-residue polypeptide: Enolase (430 aa).

Gln167 lines the (2R)-2-phosphoglycerate pocket. The active-site Proton donor is the Glu209. Mg(2+)-binding residues include Asp246, Glu287, and Asp314. Lys339, Arg368, and Ser369 together coordinate (2R)-2-phosphoglycerate. Lys339 (proton acceptor) is an active-site residue.

This sequence belongs to the enolase family. It depends on Mg(2+) as a cofactor.

Its subcellular location is the cytoplasm. The protein localises to the secreted. It is found in the cell surface. The catalysed reaction is (2R)-2-phosphoglycerate = phosphoenolpyruvate + H2O. Its pathway is carbohydrate degradation; glycolysis; pyruvate from D-glyceraldehyde 3-phosphate: step 4/5. In terms of biological role, catalyzes the reversible conversion of 2-phosphoglycerate (2-PG) into phosphoenolpyruvate (PEP). It is essential for the degradation of carbohydrates via glycolysis. The polypeptide is Enolase (Synechococcus sp. (strain ATCC 27144 / PCC 6301 / SAUG 1402/1) (Anacystis nidulans)).